The primary structure comprises 78 residues: Small nuclear ribonucleoprotein F (78 aa).

Residues 7–78 (NPKPFLQGLI…NVLWVGESTV (72 aa)) enclose the Sm domain.

Belongs to the snRNP Sm proteins family. SmF/LSm6 subfamily. In terms of assembly, belongs to the 40S cdc5-associated complex (or cwf complex), a spliceosome sub-complex reminiscent of a late-stage spliceosome composed of the U2, U5 and U6 snRNAs and at least brr2, cdc5, cwf2/prp3, cwf3/syf1, cwf4/syf3, cwf5/ecm2, spp42/cwf6, cwf7/spf27, cwf8, cwf9, cwf10, cwf11, cwf12, prp45/cwf13, cwf14, cwf15, cwf16, cwf17, cwf18, cwf19, cwf20, cwf21, cwf22, cwf23, cwf24, cwf25, cwf26, cyp7/cwf27, cwf28, cwf29/ist3, lea1, msl1, prp5/cwf1, prp10, prp12/sap130, prp17, prp22, sap61, sap62, sap114, sap145, slu7, smb1, smd1, smd3, smf1, smg1 and syf2.

It localises to the nucleus. The protein localises to the cytoplasm. Plays a role in pre-mRNA splicing as a core component of the spliceosomal U1, U2, U4 and U5 small nuclear ribonucleoproteins (snRNPs), the building blocks of the spliceosome. The sequence is that of Small nuclear ribonucleoprotein F (smf1) from Schizosaccharomyces pombe (strain 972 / ATCC 24843) (Fission yeast).